The chain runs to 216 residues: Probable glutamine ABC transporter permease protein GlnM (216 aa).

In terms of domain architecture, ABC transmembrane type-1 spans 17-205 (FYHTLLASVI…VLTIPLSIGV (189 aa)). 5 consecutive transmembrane segments (helical) span residues 21 to 41 (LLAS…VAVM), 63 to 83 (IPLL…GLRL), 85 to 105 (GFQA…AEAI), 132 to 152 (LHII…NQFL), and 181 to 201 (LVVF…TIPL).

It belongs to the binding-protein-dependent transport system permease family. The complex is composed of two ATP-binding proteins (GlnQ), two transmembrane proteins (GlnM and GlnP) and a solute-binding protein (GlnH).

The protein localises to the cell membrane. Functionally, part of the ABC transporter complex GlnHMPQ involved in glutamine transport. Probably responsible for the translocation of the substrate across the membrane. The protein is Probable glutamine ABC transporter permease protein GlnM (glnM) of Bacillus subtilis (strain 168).